A 776-amino-acid chain; its full sequence is Protein translocase subunit SecA 2 (776 aa).

ATP-binding positions include glutamine 80, 98 to 102 (GEGKT), and aspartate 486.

The protein belongs to the SecA family. Monomer and homodimer. Part of the essential Sec protein translocation apparatus which comprises SecA, SecYEG and auxiliary proteins SecDF. Other proteins may also be involved.

It localises to the cell membrane. Its subcellular location is the cytoplasm. The enzyme catalyses ATP + H2O + cellular proteinSide 1 = ADP + phosphate + cellular proteinSide 2.. In terms of biological role, part of the Sec protein translocase complex. Interacts with the SecYEG preprotein conducting channel. Has a central role in coupling the hydrolysis of ATP to the transfer of proteins into and across the cell membrane, serving as an ATP-driven molecular motor driving the stepwise translocation of polypeptide chains across the membrane. This Listeria monocytogenes serotype 4b (strain F2365) protein is Protein translocase subunit SecA 2.